The sequence spans 727 residues: Glucans biosynthesis glucosyltransferase H (727 aa).

Residues 18–43 form a disordered region; sequence SAMPNERPGAMEPQSLSQMPEGFPRR. Transmembrane regions (helical) follow at residues 58–78, 94–114, 278–298, 408–428, 460–480, 496–516, and 572–592; these read FFVV…MGAV, LFAI…AGFF, LQQF…GWWV, IMAY…LMLA, LFYI…LLLL, ILSV…MMFI, and LLAW…ISAW.

It belongs to the glycosyltransferase 2 family. OpgH subfamily.

Its subcellular location is the cell inner membrane. Its pathway is glycan metabolism; osmoregulated periplasmic glucan (OPG) biosynthesis. Functionally, involved in the biosynthesis of osmoregulated periplasmic glucans (OPGs). The sequence is that of Glucans biosynthesis glucosyltransferase H from Shewanella sp. (strain ANA-3).